A 440-amino-acid chain; its full sequence is Transposon Ty1-GR2 Gag polyprotein (440 aa).

Residues 1 to 16 (MESQQLSQHSHISHGS) show a composition bias toward low complexity. Disordered stretches follow at residues 1–93 (MESQ…MMTQ), 126–173 (PQSQ…RPPP), and 352–440 (GSRN…PGTY). 2 stretches are compositionally biased toward polar residues: residues 48 to 60 (TKANSQQTTTPAS) and 127 to 152 (QSQFPQYPSSVGTPLSTPSPESGNTF). Positions 153–165 (TDSSSADSDMTST) are enriched in low complexity. Residues 299 to 401 (NNGIHINNKV…NSKSKTARAH (103 aa)) are RNA-binding. Low complexity predominate over residues 402-418 (NVSTSNNSPSTDNDSIS). The residue at position 416 (Ser416) is a Phosphoserine. Polar residues predominate over residues 419–428 (KSTTEPIQLN). Basic and acidic residues predominate over residues 429–440 (NKHDLHLRPGTY).

As to quaternary structure, homotrimer.

It localises to the cytoplasm. Functionally, capsid protein (CA) is the structural component of the virus-like particle (VLP), forming the shell that encapsulates the retrotransposons dimeric RNA genome. The particles are assembled from trimer-clustered units and there are holes in the capsid shells that allow for the diffusion of macromolecules. CA also has nucleocapsid-like chaperone activity, promoting primer tRNA(i)-Met annealing to the multipartite primer-binding site (PBS), dimerization of Ty1 RNA and initiation of reverse transcription. This chain is Transposon Ty1-GR2 Gag polyprotein (TY1A-GR2), found in Saccharomyces cerevisiae (strain ATCC 204508 / S288c) (Baker's yeast).